Reading from the N-terminus, the 575-residue chain is uncharacterized protein (575 aa).

The first 28 residues, 1-28, serve as a signal peptide directing secretion; sequence MSNLLWKSLVVSPAVLGATLLVSSAAIA. The SLH domain occupies 87 to 151; that stretch reads SVSQFSDVQP…DRVNELIATA (65 aa). A coiled-coil region spans residues 158-196; sequence KQDLATLQRLQEEFSAELATLRGRVDALEARTAELEANQ.

This sequence belongs to the OprB family.

This is an uncharacterized protein from Nostoc sp. (strain PCC 7120 / SAG 25.82 / UTEX 2576).